A 72-amino-acid polypeptide reads, in one-letter code: Translation initiation factor IF-1 (72 aa).

In terms of domain architecture, S1-like spans 1–72; that stretch reads MAKQDVIELE…SRGRITYRYK (72 aa).

It belongs to the IF-1 family. In terms of assembly, component of the 30S ribosomal translation pre-initiation complex which assembles on the 30S ribosome in the order IF-2 and IF-3, IF-1 and N-formylmethionyl-tRNA(fMet); mRNA recruitment can occur at any time during PIC assembly.

The protein resides in the cytoplasm. Functionally, one of the essential components for the initiation of protein synthesis. Stabilizes the binding of IF-2 and IF-3 on the 30S subunit to which N-formylmethionyl-tRNA(fMet) subsequently binds. Helps modulate mRNA selection, yielding the 30S pre-initiation complex (PIC). Upon addition of the 50S ribosomal subunit IF-1, IF-2 and IF-3 are released leaving the mature 70S translation initiation complex. This is Translation initiation factor IF-1 from Staphylococcus epidermidis (strain ATCC 35984 / DSM 28319 / BCRC 17069 / CCUG 31568 / BM 3577 / RP62A).